We begin with the raw amino-acid sequence, 169 residues long: Transmembrane protein B169L (169 aa).

Transmembrane regions (helical) follow at residues 28–48 and 60–80; these read NPFI…FAIC and TAIY…YVLN. Asparagine 88 is a glycosylation site (N-linked (GlcNAc...) asparagine; by host). Residues 107-169 form a disordered region; it reads DEIIPPISPP…EVIMPSQYNN (63 aa). The span at 144 to 154 shows a compositional bias: low complexity; the sequence is SKPASSADSKP.

Belongs to the asfivirus B169L family.

Its subcellular location is the host membrane. It localises to the virion. In Ornithodoros (relapsing fever ticks), this protein is Transmembrane protein B169L.